The following is a 433-amino-acid chain: Serine hydroxymethyltransferase (433 aa).

Residues Leu-132 and 136-138 each bind (6S)-5,6,7,8-tetrahydrofolate; that span reads GHL. Lys-241 bears the N6-(pyridoxal phosphate)lysine mark.

This sequence belongs to the SHMT family. In terms of assembly, homodimer. Pyridoxal 5'-phosphate is required as a cofactor.

The protein resides in the cytoplasm. It catalyses the reaction (6R)-5,10-methylene-5,6,7,8-tetrahydrofolate + glycine + H2O = (6S)-5,6,7,8-tetrahydrofolate + L-serine. The protein operates within one-carbon metabolism; tetrahydrofolate interconversion. It participates in amino-acid biosynthesis; glycine biosynthesis; glycine from L-serine: step 1/1. Its function is as follows. Catalyzes the reversible interconversion of serine and glycine with tetrahydrofolate (THF) serving as the one-carbon carrier. This reaction serves as the major source of one-carbon groups required for the biosynthesis of purines, thymidylate, methionine, and other important biomolecules. Also exhibits THF-independent aldolase activity toward beta-hydroxyamino acids, producing glycine and aldehydes, via a retro-aldol mechanism. This is Serine hydroxymethyltransferase from Nitrobacter winogradskyi (strain ATCC 25391 / DSM 10237 / CIP 104748 / NCIMB 11846 / Nb-255).